A 65-amino-acid polypeptide reads, in one-letter code: Large ribosomal subunit protein uL29 (65 aa).

It belongs to the universal ribosomal protein uL29 family.

This chain is Large ribosomal subunit protein uL29, found in Mycoplasmopsis pulmonis (strain UAB CTIP) (Mycoplasma pulmonis).